A 475-amino-acid polypeptide reads, in one-letter code: Putative response regulator NtrX-like (475 aa).

One can recognise a Response regulatory domain in the interval 5 to 121 (DVLIVDDEES…KLVILLKRAC (117 aa)). D54 carries the post-translational modification 4-aspartylphosphate. Residues 143-369 (LVGGCSVTLK…LRNVVEWTLI (227 aa)) enclose the Sigma-54 factor interaction domain. ATP-binding positions include 171-178 (GKVGSGKE) and 232-241 (ANNGTLYIDE).

Its function is as follows. Member of the two-component regulatory system RF_0895/RF_0427. The sequence is that of Putative response regulator NtrX-like from Rickettsia felis (strain ATCC VR-1525 / URRWXCal2) (Rickettsia azadi).